The sequence spans 503 residues: Arabinose import ATP-binding protein AraG 1 (503 aa).

ABC transporter domains follow at residues 5-240 and 251-497; these read LRFD…MVGR and RALG…LPQT. Residue 37–44 participates in ATP binding; sequence GENGAGKS.

The protein belongs to the ABC transporter superfamily. Arabinose importer (TC 3.A.1.2.2) family. The complex is composed of two ATP-binding proteins (AraG), two transmembrane proteins (AraH) and a solute-binding protein (AraF).

It is found in the cell inner membrane. It carries out the reaction L-arabinose(out) + ATP + H2O = L-arabinose(in) + ADP + phosphate + H(+). Functionally, part of the ABC transporter complex AraFGH involved in arabinose import. Responsible for energy coupling to the transport system. The protein is Arabinose import ATP-binding protein AraG 1 of Burkholderia lata (strain ATCC 17760 / DSM 23089 / LMG 22485 / NCIMB 9086 / R18194 / 383).